The following is a 236-amino-acid chain: Small ribosomal subunit protein eS6 (236 aa).

It belongs to the eukaryotic ribosomal protein eS6 family. In terms of assembly, component of the small ribosomal subunit. Part of the small subunit (SSU) processome, composed of more than 70 proteins and the RNA chaperone small nucleolar RNA (snoRNA) U3. Post-translationally, ribosomal protein S6 is the major substrate of protein kinases in eukaryote ribosomes.

The protein localises to the cytoplasm. It is found in the nucleus. Its subcellular location is the nucleolus. Its function is as follows. Component of the 40S small ribosomal subunit. Plays an important role in controlling cell growth and proliferation through the selective translation of particular classes of mRNA. Part of the small subunit (SSU) processome, first precursor of the small eukaryotic ribosomal subunit. During the assembly of the SSU processome in the nucleolus, many ribosome biogenesis factors, an RNA chaperone and ribosomal proteins associate with the nascent pre-rRNA and work in concert to generate RNA folding, modifications, rearrangements and cleavage as well as targeted degradation of pre-ribosomal RNA by the RNA exosome. This chain is Small ribosomal subunit protein eS6 (rps6), found in Dictyostelium discoideum (Social amoeba).